The following is a 194-amino-acid chain: Adenylate kinase (194 aa).

ATP is bound at residue 11–16 (GSGKGT). The tract at residues 31–60 (STGELLRAEIKAQTELGQAAAGYINEGHLV) is NMP. Residues T32, R37, 58–60 (HLV), 86–89 (GFPR), and Q93 contribute to the AMP site. Residues 127-137 (NRGKVSGRSDD) are LID. R128 is an ATP binding site. Residues R134 and R145 each contribute to the AMP site. G173 serves as a coordination point for ATP.

This sequence belongs to the adenylate kinase family. As to quaternary structure, monomer.

It is found in the cytoplasm. It catalyses the reaction AMP + ATP = 2 ADP. The protein operates within purine metabolism; AMP biosynthesis via salvage pathway; AMP from ADP: step 1/1. Its function is as follows. Catalyzes the reversible transfer of the terminal phosphate group between ATP and AMP. Plays an important role in cellular energy homeostasis and in adenine nucleotide metabolism. This chain is Adenylate kinase, found in Porphyromonas gingivalis (strain ATCC BAA-308 / W83).